Reading from the N-terminus, the 834-residue chain is Taste receptor type 1 member 2 (834 aa).

An N-terminal signal peptide occupies residues 1 to 19; it reads MGPRARTVCFLFFLLWVLA. The Extracellular segment spans residues 20 to 561; that stretch reads ELAENSDFHL…SFLEWHEAAT (542 aa). N-linked (GlcNAc...) asparagine glycans are attached at residues Asn84, Asn292, Asn312, Asn363, Asn423, Asn482, and Asn522. The chain crosses the membrane as a helical span at residues 562–582; sequence IAVALLAALGFLXXXXXXXXX. Over 583-597 the chain is Cytoplasmic; it reads XXXXXXPMVRSAGGP. The helical transmembrane segment at 598–618 threads the bilayer; the sequence is MCFLMLTLLLVAYMVVPVYVG. The Extracellular portion of the chain corresponds to 619–630; sequence PPKVTTCLCRQA. Residues 631–651 form a helical membrane-spanning segment; sequence LFPVCFTICISCITMRSFQIV. Residues 652–676 lie on the Cytoplasmic side of the membrane; sequence CVFKMASRFPRAYSYWVRYQGSYVS. A helical transmembrane segment spans residues 677-697; it reads VAFITALKVVTVVISLLATGL. The Extracellular portion of the chain corresponds to 698–722; it reads NPTTRADTDDPKIMIISCNPNYRNS. The helical transmembrane segment at 723-743 threads the bilayer; sequence LLFNTSLDLLLSVVGFSFAYM. Topologically, residues 744-755 are cytoplasmic; it reads GKELPTNYNEAK. Residues 756 to 776 traverse the membrane as a helical segment; the sequence is FITFSMTFYFTSSVSLCTFMS. The Extracellular segment spans residues 777-779; sequence VYD. A helical membrane pass occupies residues 780–800; sequence GVLVTIVDLLVTVFNLLAISL. The Cytoplasmic segment spans residues 801-834; sequence GYFGPKCYMILFYPERNTPAYFNSMIQGYTMRRD.

This sequence belongs to the G-protein coupled receptor 3 family. TAS1R subfamily. As to quaternary structure, forms heterodimers with TAS1R3.

It is found in the cell membrane. Its function is as follows. Putative taste receptor. TAS1R2/TAS1R3 recognizes diverse natural and synthetic sweeteners. The polypeptide is Taste receptor type 1 member 2 (TAS1R2) (Cebuella pygmaea (Pygmy marmoset)).